We begin with the raw amino-acid sequence, 185 residues long: Photosystem I assembly protein Ycf4 (185 aa).

The next 2 membrane-spanning stretches (helical) occupy residues 20–40 (GNFF…SVGA) and 57–77 (ILFF…LFIS).

This sequence belongs to the Ycf4 family.

It is found in the plastid. Its subcellular location is the chloroplast thylakoid membrane. In terms of biological role, seems to be required for the assembly of the photosystem I complex. This is Photosystem I assembly protein Ycf4 from Agrostis stolonifera (Creeping bentgrass).